A 125-amino-acid chain; its full sequence is MEYQFTHSIHGVVAKCSMDHEAFARWLNTEITENPKELINIFAEIEKCRAAYPNHYECVFEGKEYSLFLDCDEVMVKANNLDDAFDESQMEDGFQFYDQESIAFCGLEDFENFLKAYQKFSKTYH.

This sequence belongs to the UPF0231 family.

This Actinobacillus pleuropneumoniae serotype 7 (strain AP76) protein is UPF0231 protein APP7_1023.